Reading from the N-terminus, the 299-residue chain is ATP phosphoribosyltransferase (299 aa).

Belongs to the ATP phosphoribosyltransferase family. Long subfamily. As to quaternary structure, equilibrium between an active dimeric form, an inactive hexameric form and higher aggregates. Interconversion between the various forms is largely reversible and is influenced by the natural substrates and inhibitors of the enzyme. It depends on Mg(2+) as a cofactor.

It localises to the cytoplasm. The enzyme catalyses 1-(5-phospho-beta-D-ribosyl)-ATP + diphosphate = 5-phospho-alpha-D-ribose 1-diphosphate + ATP. The protein operates within amino-acid biosynthesis; L-histidine biosynthesis; L-histidine from 5-phospho-alpha-D-ribose 1-diphosphate: step 1/9. With respect to regulation, feedback inhibited by histidine. Functionally, catalyzes the condensation of ATP and 5-phosphoribose 1-diphosphate to form N'-(5'-phosphoribosyl)-ATP (PR-ATP). Has a crucial role in the pathway because the rate of histidine biosynthesis seems to be controlled primarily by regulation of HisG enzymatic activity. The polypeptide is ATP phosphoribosyltransferase (Yersinia pseudotuberculosis serotype O:1b (strain IP 31758)).